The primary structure comprises 932 residues: 2-oxoglutarate dehydrogenase E1 component (932 aa).

It belongs to the alpha-ketoglutarate dehydrogenase family. In terms of assembly, homodimer. Part of the 2-oxoglutarate dehydrogenase (OGDH) complex composed of E1 (2-oxoglutarate dehydrogenase), E2 (dihydrolipoamide succinyltransferase) and E3 (dihydrolipoamide dehydrogenase); the complex contains multiple copies of the three enzymatic components (E1, E2 and E3). Requires thiamine diphosphate as cofactor.

The enzyme catalyses N(6)-[(R)-lipoyl]-L-lysyl-[protein] + 2-oxoglutarate + H(+) = N(6)-[(R)-S(8)-succinyldihydrolipoyl]-L-lysyl-[protein] + CO2. In terms of biological role, E1 component of the 2-oxoglutarate dehydrogenase (OGDH) complex which catalyzes the decarboxylation of 2-oxoglutarate, the first step in the conversion of 2-oxoglutarate to succinyl-CoA and CO(2). In Staphylococcus aureus (strain MRSA252), this protein is 2-oxoglutarate dehydrogenase E1 component.